Reading from the N-terminus, the 417-residue chain is Probable serine/threonine-protein kinase WNK9 (417 aa).

The interval 1-23 (MDLVEAEAEEQPPDEDGDEEGYV) is disordered. A Protein kinase domain is found at 32-289 (IRYDEIVGSG…ATELLKSSFL (258 aa)). ATP-binding positions include 113-116 (TELF) and Lys-163. The active-site Proton acceptor is the Asp-180.

This sequence belongs to the protein kinase superfamily. Ser/Thr protein kinase family. WNK subfamily.

It carries out the reaction L-seryl-[protein] + ATP = O-phospho-L-seryl-[protein] + ADP + H(+). It catalyses the reaction L-threonyl-[protein] + ATP = O-phospho-L-threonyl-[protein] + ADP + H(+). The sequence is that of Probable serine/threonine-protein kinase WNK9 (WNK9) from Oryza sativa subsp. japonica (Rice).